The sequence spans 427 residues: Histidinol dehydrogenase (427 aa).

NAD(+) contacts are provided by Tyr-127, Gln-185, and Asn-208. Substrate contacts are provided by Ser-232, Gln-254, and His-257. Positions 254 and 257 each coordinate Zn(2+). Residues Glu-321 and His-322 each act as proton acceptor in the active site. 4 residues coordinate substrate: His-322, Asp-355, Glu-409, and His-414. Asp-355 contributes to the Zn(2+) binding site. A Zn(2+)-binding site is contributed by His-414.

It belongs to the histidinol dehydrogenase family. The cofactor is Zn(2+).

The catalysed reaction is L-histidinol + 2 NAD(+) + H2O = L-histidine + 2 NADH + 3 H(+). The protein operates within amino-acid biosynthesis; L-histidine biosynthesis; L-histidine from 5-phospho-alpha-D-ribose 1-diphosphate: step 9/9. Catalyzes the sequential NAD-dependent oxidations of L-histidinol to L-histidinaldehyde and then to L-histidine. This chain is Histidinol dehydrogenase, found in Haemophilus influenzae (strain 86-028NP).